The chain runs to 132 residues: MTMTDPIADMLTRLRNANSAYHDSVTMPASKIKSHIAEILQQEGFITGWKTEDAEVGKNLTLELKFGPNRERSIAGIKRISKPGLRVYAKSTNLPKVLGGLGVAIISTSHGLLTDKQAGKKGVGGEVLAYVW.

Belongs to the universal ribosomal protein uS8 family. In terms of assembly, part of the 30S ribosomal subunit. Contacts proteins S5 and S12.

In terms of biological role, one of the primary rRNA binding proteins, it binds directly to 16S rRNA central domain where it helps coordinate assembly of the platform of the 30S subunit. The polypeptide is Small ribosomal subunit protein uS8 (Streptomyces coelicolor (strain ATCC BAA-471 / A3(2) / M145)).